The primary structure comprises 417 residues: NADH-quinone oxidoreductase subunit D (417 aa).

Belongs to the complex I 49 kDa subunit family. NDH-1 is composed of 14 different subunits. Subunits NuoB, C, D, E, F, and G constitute the peripheral sector of the complex.

The protein resides in the cell inner membrane. The enzyme catalyses a quinone + NADH + 5 H(+)(in) = a quinol + NAD(+) + 4 H(+)(out). Its function is as follows. NDH-1 shuttles electrons from NADH, via FMN and iron-sulfur (Fe-S) centers, to quinones in the respiratory chain. The immediate electron acceptor for the enzyme in this species is believed to be ubiquinone. Couples the redox reaction to proton translocation (for every two electrons transferred, four hydrogen ions are translocated across the cytoplasmic membrane), and thus conserves the redox energy in a proton gradient. The sequence is that of NADH-quinone oxidoreductase subunit D from Francisella philomiragia subsp. philomiragia (strain ATCC 25017 / CCUG 19701 / FSC 153 / O#319-036).